The primary structure comprises 1848 residues: Unconventional myosin-Vb (1848 aa).

Met-1 bears the N-acetylmethionine mark. A Myosin N-terminal SH3-like domain is found at 8–60 (SQCTRVWIPDPDEVWRSAELTKDYKEGDKSLQLRLEDETILEYPIDVQRNQLP). The tract at residues 21 to 40 (VWRSAELTKDYKEGDKSLQL) is requires for interaction with LIMA1. Residues 69 to 761 (VGENDLTALS…QVAYLEKLRA (693 aa)) form the Myosin motor domain. Residue 163–170 (GESGAGKT) participates in ATP binding. The disordered stretch occupies residues 596–630 (KDPVPATTPGKGSSSKISVRSARPPMKVSNKEHKK). The segment at 640–662 (LHLLMETLNATTPHYVRCIKPND) is actin-binding. 6 consecutive IQ domains span residues 769-798 (IMIQKTVRGWLQKVKYHRLKGATLTLQRYC), 792-821 (LTLQRYCRGHLARRLAEHLRRIRAAVVLQK), 817-848 (VVLQKHYRMQRARQAYQRVRRAAVVIQAFTRA), 840-869 (VVIQAFTRAMFVRRTYRQVLMEHKATTIQK), 865-896 (TTIQKHVRGWMARRHFQRLRDAAIVIQCAFRM), and 888-917 (IVIQCAFRMLKARRELKALRIEARSAEHLK). Coiled coils occupy residues 899-1266 (ARRE…ILRT) and 1341-1471 (RLLE…GMLE). Disordered stretches follow at residues 1093-1123 (QTPGHRRNPSNQSSLESDSNYPSISTSEIGD) and 1166-1192 (QLEKREQQDSKKVQAEPPQTDIDLDPN). Positions 1101–1121 (PSNQSSLESDSNYPSISTSEI) are enriched in polar residues. Residues 1166-1179 (QLEKREQQDSKKVQ) show a composition bias toward basic and acidic residues. Ser-1446 carries the phosphoserine modification. Residues 1526–1803 (TSTINGIKKV…IRTIQAQLQE (278 aa)) form the Dilute domain.

It belongs to the TRAFAC class myosin-kinesin ATPase superfamily. Myosin family. Component of the CART complex, at least composed of ACTN4, HGS/HRS, MYO5B and TRIM3. Interacts with RAB11FIP2, RAB11A, and RAB8A. Found in a complex with CFTR and RAB11A. Interacts with NPC1L1;. Interacts with LIMA1.

Its subcellular location is the cytoplasm. Functionally, may be involved in vesicular trafficking via its association with the CART complex. The CART complex is necessary for efficient transferrin receptor recycling but not for EGFR degradation. Required in a complex with RAB11A and RAB11FIP2 for the transport of NPC1L1 to the plasma membrane. Together with RAB11A participates in CFTR trafficking to the plasma membrane and TF (transferrin) recycling in nonpolarized cells. Together with RAB11A and RAB8A participates in epithelial cell polarization. Together with RAB25 regulates transcytosis. Required for proper localization of bile salt export pump ABCB11 at the apical/canalicular plasma membrane of hepatocytes. The protein is Unconventional myosin-Vb (MYO5B) of Homo sapiens (Human).